The following is a 474-amino-acid chain: MKLFPLFADLQGRRVLVVGGGEIAARKVQLLLEASADVRVGAPALTPELALLAAQGRIHALQGEFRPDWLDDAWLVVAATDDRAVNAAVSQAAQARRIFSNVVDDAELSSFQVPSIVDRSPLVVAISSSGVAPVLARRLREKVESLFDHSLGALAALAARHRPRIRERRPDLKQRRKFYDWLLDGPVAALLRQQRPEEAERLLETALQAPQDDGAGSVVLVGAGPGDPGLLTLKALRALNEADVILYDRLVSPAVLALARRDADRVAVGKRPGEDHDATQARIHALLVEHARAGRRVVRLKGGDAFIFGRGGEELEYLRAHGVRYEVVPGITAALACAAYAGIPLTHRDHAQSVRLVTAHCREDEDTLDWAGLAREHQTLAFYMGVGQLETLSARLIAHGRSGATPFALIENGSRPEQRVVSGRLADLAAVARSHGVRAPALLIVGEVAGLARELHWFGAHLEGQRPAPAALAA.

A precorrin-2 dehydrogenase /sirohydrochlorin ferrochelatase region spans residues 1–203 (MKLFPLFADL…QRPEEAERLL (203 aa)). Residues 22 to 23 (EI) and 43 to 44 (PA) each bind NAD(+). S128 carries the post-translational modification Phosphoserine. The segment at 216–474 (GSVVLVGAGP…QRPAPAALAA (259 aa)) is uroporphyrinogen-III C-methyltransferase. P225 serves as a coordination point for S-adenosyl-L-methionine. The Proton acceptor role is filled by D248. K270 (proton donor) is an active-site residue. Residues 302–304 (GGD), I307, 332–333 (TA), M384, and G413 each bind S-adenosyl-L-methionine.

The protein in the N-terminal section; belongs to the precorrin-2 dehydrogenase / sirohydrochlorin ferrochelatase family. This sequence in the C-terminal section; belongs to the precorrin methyltransferase family.

The enzyme catalyses uroporphyrinogen III + 2 S-adenosyl-L-methionine = precorrin-2 + 2 S-adenosyl-L-homocysteine + H(+). It catalyses the reaction precorrin-2 + NAD(+) = sirohydrochlorin + NADH + 2 H(+). It carries out the reaction siroheme + 2 H(+) = sirohydrochlorin + Fe(2+). It participates in cofactor biosynthesis; adenosylcobalamin biosynthesis; precorrin-2 from uroporphyrinogen III: step 1/1. The protein operates within cofactor biosynthesis; adenosylcobalamin biosynthesis; sirohydrochlorin from precorrin-2: step 1/1. Its pathway is porphyrin-containing compound metabolism; siroheme biosynthesis; precorrin-2 from uroporphyrinogen III: step 1/1. It functions in the pathway porphyrin-containing compound metabolism; siroheme biosynthesis; siroheme from sirohydrochlorin: step 1/1. It participates in porphyrin-containing compound metabolism; siroheme biosynthesis; sirohydrochlorin from precorrin-2: step 1/1. Its function is as follows. Multifunctional enzyme that catalyzes the SAM-dependent methylations of uroporphyrinogen III at position C-2 and C-7 to form precorrin-2 via precorrin-1. Then it catalyzes the NAD-dependent ring dehydrogenation of precorrin-2 to yield sirohydrochlorin. Finally, it catalyzes the ferrochelation of sirohydrochlorin to yield siroheme. The sequence is that of Siroheme synthase from Bordetella petrii (strain ATCC BAA-461 / DSM 12804 / CCUG 43448).